The chain runs to 282 residues: uncharacterized protein (282 aa).

The HTH rpiR-type domain occupies 2–78 (TDVLAVIREM…IKIAVSLAKQ (77 aa)). Residues 38-57 (VNELANACDTSEASIIRFCR) constitute a DNA-binding region (H-T-H motif). The SIS domain maps to 122–262 (AAEALANANK…FILVAQKKYN (141 aa)).

This is an uncharacterized protein from Caldanaerobacter subterraneus subsp. tengcongensis (strain DSM 15242 / JCM 11007 / NBRC 100824 / MB4) (Thermoanaerobacter tengcongensis).